A 92-amino-acid chain; its full sequence is Small ribosomal subunit protein uS19 (92 aa).

The protein belongs to the universal ribosomal protein uS19 family.

Protein S19 forms a complex with S13 that binds strongly to the 16S ribosomal RNA. This is Small ribosomal subunit protein uS19 from Pectobacterium atrosepticum (strain SCRI 1043 / ATCC BAA-672) (Erwinia carotovora subsp. atroseptica).